We begin with the raw amino-acid sequence, 172 residues long: Adenine phosphoribosyltransferase (172 aa).

Belongs to the purine/pyrimidine phosphoribosyltransferase family. Homodimer.

The protein localises to the cytoplasm. The enzyme catalyses AMP + diphosphate = 5-phospho-alpha-D-ribose 1-diphosphate + adenine. It participates in purine metabolism; AMP biosynthesis via salvage pathway; AMP from adenine: step 1/1. In terms of biological role, catalyzes a salvage reaction resulting in the formation of AMP, that is energically less costly than de novo synthesis. The sequence is that of Adenine phosphoribosyltransferase from Staphylococcus aureus (strain Mu3 / ATCC 700698).